The following is a 299-amino-acid chain: MGFVKVVKNKQYFKRYQVKFRRRREGKTDYYARKRLTFQDKNKYNTPKYRLIVRLSNKDITVQIAYARIEGDRVVCAAYSHELPKYGIQVGLTNYAAAYCTGLLVARRVLNKLGLDSLYAGCTEVTGEEFNVEPVDDGPGAFRCFLDVGLARTTTGARVFGAMKGAVDGGLNIPHSVKRFPGYSAETKSFNADVHRAHIFGQHVADYMRSLEEEDEESFKRQFSRYIKLGIRADDLEDIYKKAHQAIRNDPTHKVTAKKSSAVTKKRWNAKKLTNEQRKTKIAAHKAAYVAKLQSETEA.

The protein belongs to the universal ribosomal protein uL18 family. Component of the large ribosomal subunit (LSU). Interacts with Fmr1 to form the RNA-induced silencing complex (RISC), a ribonucleoprotein (RNP) complex involved in translation regulation, other components of the complex are Rm62, RpL11, AGO2 and Dcr-1.

The protein localises to the cytoplasm. Its subcellular location is the nucleus. Component of the ribosome, a large ribonucleoprotein complex responsible for the synthesis of proteins in the cell. The small ribosomal subunit (SSU) binds messenger RNAs (mRNAs) and translates the encoded message by selecting cognate aminoacyl-transfer RNA (tRNA) molecules. The large subunit (LSU) contains the ribosomal catalytic site termed the peptidyl transferase center (PTC), which catalyzes the formation of peptide bonds, thereby polymerizing the amino acids delivered by tRNAs into a polypeptide chain. The nascent polypeptides leave the ribosome through a tunnel in the LSU and interact with protein factors that function in enzymatic processing, targeting, and the membrane insertion of nascent chains at the exit of the ribosomal tunnel. The chain is Large ribosomal subunit protein uL18 (RpL5) from Drosophila melanogaster (Fruit fly).